Here is a 293-residue protein sequence, read N- to C-terminus: Oxidoreductase R2 (293 aa).

It belongs to the asaB hydroxylase/desaturase family.

It participates in secondary metabolite biosynthesis. In terms of biological role, oxidoreductase; part of the gene cluster that mediates the biosynthesis of squalestatin S1 (SQS1, also known as zaragozic acid A), a heavily oxidized fungal polyketide that offers potent cholesterol lowering activity by targeting squalene synthase (SS). SQS1 is composed of a 2,8-dioxobicyclic[3.2.1]octane-3,4,5-tricarboxyclic acid core that is connected to two lipophilic polyketide arms. These initial steps feature the priming of an unusual benzoic acid starter unit onto the highly reducing polyketide synthase pks2, followed by oxaloacetate extension and product release to generate a tricarboxylic acid containing product. The phenylalanine ammonia lyase (PAL) M7 and the acyl-CoA ligase M9 are involved in transforming phenylalanine into benzoyl-CoA. The citrate synthase-like protein R3 is involved in connecting the C-alpha-carbons of the hexaketide chain and oxaloacetate to afford the tricarboxylic acid unit. The potential hydrolytic enzymes, M8 and M10, are in close proximity to pks2 and may participate in product release. On the other side, the tetraketide arm is synthesized by a the squalestatin tetraketide synthase pks1 and enzymatically esterified to the core in the last biosynthetic step, by the acetyltransferase M4. The biosynthesis of the tetraketide must involve 3 rounds of chain extension. After the first and second rounds methyl-transfer occurs, and in all rounds of extension the ketoreductase and dehydratase are active. The enoyl reductase and C-MeT of pks1 are not active in the final round of extension. The acetyltransferase M4 appears to have a broad substrate selectivity for its acyl CoA substrate, allowing the in vitro synthesis of novel squalestatins. The biosynthesis of SQS1 requires several oxidative steps likely performed by oxidoreductases M1, R1 and R2. Finally, in support of the identification of the cluster as being responsible for SQS1 production, the cluster contains a gene encoding a putative squalene synthase (SS) R6, suggesting a likely mechanism for self-resistance. The protein is Oxidoreductase R2 of Phoma sp. (strain ATCC 20986 / MF5453).